Consider the following 282-residue polypeptide: Release factor glutamine methyltransferase (282 aa).

Residues 120 to 124 (GVGSG), aspartate 143, and asparagine 189 each bind S-adenosyl-L-methionine. 189 to 192 (NPPY) contacts substrate.

Belongs to the protein N5-glutamine methyltransferase family. PrmC subfamily.

It catalyses the reaction L-glutaminyl-[peptide chain release factor] + S-adenosyl-L-methionine = N(5)-methyl-L-glutaminyl-[peptide chain release factor] + S-adenosyl-L-homocysteine + H(+). Functionally, methylates the class 1 translation termination release factors RF1/PrfA and RF2/PrfB on the glutamine residue of the universally conserved GGQ motif. The polypeptide is Release factor glutamine methyltransferase (Dictyoglomus turgidum (strain DSM 6724 / Z-1310)).